Reading from the N-terminus, the 418-residue chain is Putative L-glutamine:3-amino-2,3-dideoxy-scyllo-inosose aminotransferase (418 aa).

At Lys-199 the chain carries N6-(pyridoxal phosphate)lysine.

The protein belongs to the DegT/DnrJ/EryC1 family. L-glutamine:2-deoxy-scyllo-inosose/scyllo-inosose aminotransferase subfamily. Requires pyridoxal 5'-phosphate as cofactor.

It catalyses the reaction 3-amino-2,3-dideoxy-scyllo-inosose + L-glutamine = 2-deoxystreptamine + 2-oxoglutaramate. It participates in metabolic intermediate biosynthesis; 2-deoxystreptamine biosynthesis; 2-deoxystreptamine from D-glucose 6-phosphate: step 4/4. It functions in the pathway antibiotic biosynthesis; gentamicin biosynthesis. Its function is as follows. Catalyzes the transamination of 3-amino-2,3-dideoxy-scyllo-inosose (amino-DOI) into 2-deoxystreptamine (DOS). The chain is Putative L-glutamine:3-amino-2,3-dideoxy-scyllo-inosose aminotransferase (gtmD) from Micromonospora echinospora (Micromonospora purpurea).